Here is a 297-residue protein sequence, read N- to C-terminus: Glutamyl-Q tRNA(Asp) synthetase (297 aa).

L-glutamate-binding positions include 7–11 (RFAPS) and glutamate 43. The 'HIGH' region motif lies at 10-20 (PSPTGPLHFGS). Cysteine 99, cysteine 101, tyrosine 122, and cysteine 126 together coordinate Zn(2+). L-glutamate is bound by residues tyrosine 182 and arginine 200. The short motif at 238 to 242 (KLSKQ) is the 'KMSKS' region element. Residue lysine 241 participates in ATP binding.

It belongs to the class-I aminoacyl-tRNA synthetase family. GluQ subfamily. Zn(2+) serves as cofactor.

Catalyzes the tRNA-independent activation of glutamate in presence of ATP and the subsequent transfer of glutamate onto a tRNA(Asp). Glutamate is transferred on the 2-amino-5-(4,5-dihydroxy-2-cyclopenten-1-yl) moiety of the queuosine in the wobble position of the QUC anticodon. The sequence is that of Glutamyl-Q tRNA(Asp) synthetase from Burkholderia pseudomallei (strain K96243).